A 387-amino-acid chain; its full sequence is 3-ketoacyl-CoA thiolase (387 aa).

C91 (acyl-thioester intermediate) is an active-site residue. Catalysis depends on proton acceptor residues H343 and C373.

The protein belongs to the thiolase-like superfamily. Thiolase family. In terms of assembly, heterotetramer of two alpha chains (FadB) and two beta chains (FadA).

Its subcellular location is the cytoplasm. It carries out the reaction an acyl-CoA + acetyl-CoA = a 3-oxoacyl-CoA + CoA. It participates in lipid metabolism; fatty acid beta-oxidation. In terms of biological role, catalyzes the final step of fatty acid oxidation in which acetyl-CoA is released and the CoA ester of a fatty acid two carbons shorter is formed. The sequence is that of 3-ketoacyl-CoA thiolase from Aliivibrio salmonicida (strain LFI1238) (Vibrio salmonicida (strain LFI1238)).